The chain runs to 547 residues: Chaperonin GroEL (547 aa).

ATP is bound by residues 30–33 (TLGP), Lys-51, 87–91 (DGTTT), Gly-415, and Asp-496. Residues 525–547 (KPEPKSPAGGPGMGGMGGMDGMM) form a disordered region. Over residues 533–547 (GGPGMGGMGGMDGMM) the composition is skewed to gly residues.

This sequence belongs to the chaperonin (HSP60) family. As to quaternary structure, forms a cylinder of 14 subunits composed of two heptameric rings stacked back-to-back. Interacts with the co-chaperonin GroES.

It localises to the cytoplasm. The enzyme catalyses ATP + H2O + a folded polypeptide = ADP + phosphate + an unfolded polypeptide.. Together with its co-chaperonin GroES, plays an essential role in assisting protein folding. The GroEL-GroES system forms a nano-cage that allows encapsulation of the non-native substrate proteins and provides a physical environment optimized to promote and accelerate protein folding. The chain is Chaperonin GroEL from Cereibacter sphaeroides (strain ATCC 17029 / ATH 2.4.9) (Rhodobacter sphaeroides).